The primary structure comprises 669 residues: tRNA 5-methylaminomethyl-2-thiouridine biosynthesis bifunctional protein MnmC (669 aa).

Positions 1-246 are tRNA (mnm(5)s(2)U34)-methyltransferase; sequence MIKNANIHFN…KRSMLIGTLK (246 aa). The segment at 271–669 is FAD-dependent cmnm(5)s(2)U34 oxidoreductase; the sequence is IGGGIASSCI…IVRDLIRNKI (399 aa).

This sequence in the N-terminal section; belongs to the methyltransferase superfamily. tRNA (mnm(5)s(2)U34)-methyltransferase family. The protein in the C-terminal section; belongs to the DAO family. The cofactor is FAD.

It is found in the cytoplasm. The catalysed reaction is 5-aminomethyl-2-thiouridine(34) in tRNA + S-adenosyl-L-methionine = 5-methylaminomethyl-2-thiouridine(34) in tRNA + S-adenosyl-L-homocysteine + H(+). Functionally, catalyzes the last two steps in the biosynthesis of 5-methylaminomethyl-2-thiouridine (mnm(5)s(2)U) at the wobble position (U34) in tRNA. Catalyzes the FAD-dependent demodification of cmnm(5)s(2)U34 to nm(5)s(2)U34, followed by the transfer of a methyl group from S-adenosyl-L-methionine to nm(5)s(2)U34, to form mnm(5)s(2)U34. This chain is tRNA 5-methylaminomethyl-2-thiouridine biosynthesis bifunctional protein MnmC, found in Pseudoalteromonas translucida (strain TAC 125).